A 203-amino-acid polypeptide reads, in one-letter code: Glycerol-3-phosphate acyltransferase (203 aa).

The next 6 helical transmembrane spans lie at 1-21, 52-72, 73-93, 115-135, 140-160, and 161-181; these read MPAWLSALLAALGGYLLGSIP, VGKGPALLVLLVDAAKGAAAV, ALGSALGSPWWVVVAALGAVI, ILLAMAWPVALATFGVWLLGI, IVSFSSLLAAVAAPLLMWALG, and QPLPYLLFALAGGVYVIAAHR.

It belongs to the PlsY family. In terms of assembly, probably interacts with PlsX.

The protein resides in the cell inner membrane. The catalysed reaction is an acyl phosphate + sn-glycerol 3-phosphate = a 1-acyl-sn-glycero-3-phosphate + phosphate. The protein operates within lipid metabolism; phospholipid metabolism. Catalyzes the transfer of an acyl group from acyl-phosphate (acyl-PO(4)) to glycerol-3-phosphate (G3P) to form lysophosphatidic acid (LPA). This enzyme utilizes acyl-phosphate as fatty acyl donor, but not acyl-CoA or acyl-ACP. This is Glycerol-3-phosphate acyltransferase from Synechococcus sp. (strain JA-3-3Ab) (Cyanobacteria bacterium Yellowstone A-Prime).